Consider the following 558-residue polypeptide: Glucose-6-phosphate isomerase (558 aa).

N-acetylalanine is present on Ala2. The residue at position 12 (Lys12) is an N6-acetyllysine. Lys34 is subject to N6-(2-hydroxyisobutyryl)lysine. Ser107 carries the phosphoserine modification. Thr109 carries the post-translational modification Phosphothreonine. An N6-acetyllysine modification is found at Lys142. 159-160 lines the D-glucose 6-phosphate pocket; it reads GS. Ser185 is modified (phosphoserine; by CK2). 210–215 is a D-glucose 6-phosphate binding site; sequence SKTFTT. Thr250 carries the post-translational modification Phosphothreonine. Residues Gln354, Glu358, and His389 each contribute to the D-glucose 6-phosphate site. Glu358 functions as the Proton donor in the catalytic mechanism. The active site involves His389. Residue Lys454 is modified to N6-acetyllysine; alternate. Lys454 is subject to N6-malonyllysine; alternate. Lys454 is modified (N6-succinyllysine; alternate). At Ser455 the chain carries Phosphoserine. Residue Lys519 coordinates D-glucose 6-phosphate. Residue Lys519 is part of the active site.

Belongs to the GPI family. In terms of assembly, homodimer; in the catalytically active form. Monomer in the secreted form. Post-translationally, phosphorylation at Ser-185 by CK2 has been shown to decrease enzymatic activity and may contribute to secretion by a non-classical secretory pathway. In terms of processing, ISGylated.

It localises to the cytoplasm. The protein resides in the secreted. It carries out the reaction alpha-D-glucose 6-phosphate = beta-D-fructose 6-phosphate. It functions in the pathway carbohydrate degradation; glycolysis; D-glyceraldehyde 3-phosphate and glycerone phosphate from D-glucose: step 2/4. Its activity is regulated as follows. Strongly inhibited by erythrose 4-phosphate. In the cytoplasm, catalyzes the conversion of glucose-6-phosphate to fructose-6-phosphate, the second step in glycolysis, and the reverse reaction during gluconeogenesis. Besides it's role as a glycolytic enzyme, also acts as a secreted cytokine: acts as an angiogenic factor (AMF) that stimulates endothelial cell motility. Acts as a neurotrophic factor, neuroleukin, for spinal and sensory neurons. It is secreted by lectin-stimulated T-cells and induces immunoglobulin secretion. In Homo sapiens (Human), this protein is Glucose-6-phosphate isomerase.